Consider the following 397-residue polypeptide: Enoyl-[acyl-carrier-protein] reductase [NADH] (397 aa).

NAD(+) contacts are provided by residues 47 to 52 (GASTGY), 73 to 74 (LE), 110 to 111 (DA), and 138 to 139 (LA). Residue Tyr-224 coordinates substrate. Tyr-234 serves as the catalytic Proton donor. NAD(+) is bound by residues Lys-243 and 272–274 (LVT).

It belongs to the TER reductase family. Monomer.

The enzyme catalyses a 2,3-saturated acyl-[ACP] + NAD(+) = a (2E)-enoyl-[ACP] + NADH + H(+). Its pathway is lipid metabolism; fatty acid biosynthesis. Its function is as follows. Involved in the final reduction of the elongation cycle of fatty acid synthesis (FAS II). Catalyzes the reduction of a carbon-carbon double bond in an enoyl moiety that is covalently linked to an acyl carrier protein (ACP). The polypeptide is Enoyl-[acyl-carrier-protein] reductase [NADH] (Methylobacillus flagellatus (strain ATCC 51484 / DSM 6875 / VKM B-1610 / KT)).